Reading from the N-terminus, the 303-residue chain is Mesenteric estrogen-dependent adipogenesis protein (303 aa).

Highly expressed in the visceral fat depot.

The protein resides in the cytoplasm. Functionally, involved in processes that promote adipocyte differentiation, lipid accumulation, and glucose uptake in mature adipocytes. The chain is Mesenteric estrogen-dependent adipogenesis protein (MEDAG) from Homo sapiens (Human).